The chain runs to 698 residues: Methionine--tRNA ligase (698 aa).

A 'HIGH' region motif is present at residues 21-31; that stretch reads PYANGPLHFGH. 4 residues coordinate Zn(2+): Cys153, Cys156, Cys166, and Cys169. A 'KMSKS' region motif is present at residues 341 to 345; it reads QFSKS. ATP is bound at residue Lys344. A tRNA-binding domain is found at 599–698; sequence DFRKLDLRVG…EDVAPGSLVS (100 aa).

It belongs to the class-I aminoacyl-tRNA synthetase family. MetG type 1 subfamily. Homodimer. Requires Zn(2+) as cofactor.

It is found in the cytoplasm. The catalysed reaction is tRNA(Met) + L-methionine + ATP = L-methionyl-tRNA(Met) + AMP + diphosphate. In terms of biological role, is required not only for elongation of protein synthesis but also for the initiation of all mRNA translation through initiator tRNA(fMet) aminoacylation. The chain is Methionine--tRNA ligase from Protochlamydia amoebophila (strain UWE25).